Here is a 353-residue protein sequence, read N- to C-terminus: Photosystem II D2 protein (353 aa).

N-acetylthreonine is present on Thr2. The residue at position 2 (Thr2) is a Phosphothreonine. The chain crosses the membrane as a helical span at residues 41–61 (CAYFALGGWFTGTTFVTSWYT). Chlorophyll a is bound at residue His118. Residues 125 to 141 (GFMLRQFELARSVQLRP) traverse the membrane as a helical segment. Residues Gln130 and Asn143 each coordinate pheophytin a. The helical transmembrane segment at 153 to 166 (VFVSVFLIYPLGQS) threads the bilayer. Chlorophyll a is bound at residue His198. Residues 208-228 (AALLCAIHGATVENTLFEDGD) form a helical membrane-spanning segment. The a plastoquinone site is built by His215 and Phe262. Fe cation is bound at residue His215. His269 lines the Fe cation pocket. Residues 279–295 (GLWMSALGVVGLALNLR) form a helical membrane-spanning segment.

This sequence belongs to the reaction center PufL/M/PsbA/D family. In terms of assembly, PSII is composed of 1 copy each of membrane proteins PsbA, PsbB, PsbC, PsbD, PsbE, PsbF, PsbH, PsbI, PsbJ, PsbK, PsbL, PsbM, PsbT, PsbX, PsbY, PsbZ, Psb30/Ycf12, at least 3 peripheral proteins of the oxygen-evolving complex and a large number of cofactors. It forms dimeric complexes. The D1/D2 heterodimer binds P680, chlorophylls that are the primary electron donor of PSII, and subsequent electron acceptors. It shares a non-heme iron and each subunit binds pheophytin, quinone, additional chlorophylls, carotenoids and lipids. There is also a Cl(-1) ion associated with D1 and D2, which is required for oxygen evolution. The PSII complex binds additional chlorophylls, carotenoids and specific lipids. is required as a cofactor.

The protein localises to the plastid. The protein resides in the chloroplast thylakoid membrane. It carries out the reaction 2 a plastoquinone + 4 hnu + 2 H2O = 2 a plastoquinol + O2. In terms of biological role, photosystem II (PSII) is a light-driven water:plastoquinone oxidoreductase that uses light energy to abstract electrons from H(2)O, generating O(2) and a proton gradient subsequently used for ATP formation. It consists of a core antenna complex that captures photons, and an electron transfer chain that converts photonic excitation into a charge separation. The D1/D2 (PsbA/PsbD) reaction center heterodimer binds P680, the primary electron donor of PSII as well as several subsequent electron acceptors. D2 is needed for assembly of a stable PSII complex. This chain is Photosystem II D2 protein, found in Chloranthus spicatus (Chulantree).